The following is a 439-amino-acid chain: Ribosomal protein uS12 methylthiotransferase RimO (439 aa).

One can recognise an MTTase N-terminal domain in the interval 3–118 (KKFYITTLGC…AGKILREKFP (116 aa)). [4Fe-4S] cluster-binding residues include C12, C48, C81, C157, C161, and C164. The 228-residue stretch at 143 to 370 (NYSKPYAYVK…RDVHLAILEE (228 aa)) folds into the Radical SAM core domain. The TRAM domain occupies 373–438 (ESRIGQTYDA…EYDMNGTWIS (66 aa)).

This sequence belongs to the methylthiotransferase family. RimO subfamily. It depends on [4Fe-4S] cluster as a cofactor.

The protein resides in the cytoplasm. It catalyses the reaction L-aspartate(89)-[ribosomal protein uS12]-hydrogen + (sulfur carrier)-SH + AH2 + 2 S-adenosyl-L-methionine = 3-methylsulfanyl-L-aspartate(89)-[ribosomal protein uS12]-hydrogen + (sulfur carrier)-H + 5'-deoxyadenosine + L-methionine + A + S-adenosyl-L-homocysteine + 2 H(+). In terms of biological role, catalyzes the methylthiolation of an aspartic acid residue of ribosomal protein uS12. This chain is Ribosomal protein uS12 methylthiotransferase RimO, found in Leptospira borgpetersenii serovar Hardjo-bovis (strain JB197).